The sequence spans 234 residues: Large ribosomal subunit protein uL1 (234 aa).

The protein belongs to the universal ribosomal protein uL1 family. As to quaternary structure, part of the 50S ribosomal subunit.

Its function is as follows. Binds directly to 23S rRNA. The L1 stalk is quite mobile in the ribosome, and is involved in E site tRNA release. Protein L1 is also a translational repressor protein, it controls the translation of the L11 operon by binding to its mRNA. In Salmonella agona (strain SL483), this protein is Large ribosomal subunit protein uL1.